The chain runs to 200 residues: Polyadenylate-binding protein 1-like 2 (200 aa).

RRM domains are found at residues 2–80 and 90–166; these read ASLY…WSQR and GNVF…RFKS. Residues 170-200 are disordered; sequence REAERGAWARQSTSADVKDFEEDTDEEATLR. Acidic residues predominate over residues 188–200; the sequence is DFEEDTDEEATLR.

The sequence is that of Polyadenylate-binding protein 1-like 2 (PABPC1L2A) from Homo sapiens (Human).